A 269-amino-acid chain; its full sequence is Aquaporin-1 (269 aa).

Over 2–11 the chain is Cytoplasmic; the sequence is ASEFKKKLFW. A helical membrane pass occupies residues 12-29; it reads RAVVAEFLATTLFVFISI. The Extracellular portion of the chain corresponds to 30 to 46; that stretch reads GSALGFKYPVGNNQTAV. A glycan (N-linked (GlcNAc...) asparagine) is linked at Asn-42. A helical membrane pass occupies residues 47-65; it reads QDNVKVSLAFGLSIATLAQ. Residues 66–68 lie on the Cytoplasmic side of the membrane; the sequence is SVG. An intramembrane segment occupies 69 to 82; that stretch reads HISGAHLNPAVTLG. The NPA 1 motif lies at 76–78; the sequence is NPA. Residues 83 to 90 are Cytoplasmic-facing; sequence LLLSCQIS. A helical membrane pass occupies residues 91–109; that stretch reads IFRALMYIIAQCVGAIVAT. Residues 110 to 133 are Extracellular-facing; sequence AILSGITSSLTGNSLGRNDLADGV. The chain crosses the membrane as a helical span at residues 134–153; sequence NSGQGLGIEIIGTLQLVLCV. The Cytoplasmic portion of the chain corresponds to 154-163; that stretch reads LATTDRRRRD. A helical membrane pass occupies residues 164 to 181; the sequence is LGGSAPLAIGLSVALGHL. At 182-186 the chain is on the extracellular side; it reads LAIDY. The stretch at 187 to 199 is an intramembrane region; that stretch reads TGCGINPARSFGS. The short motif at 192-194 is the NPA 2 element; the sequence is NPA. Topologically, residues 200–206 are extracellular; that stretch reads AVITHNF. Asn-205 is a glycosylation site (N-linked (GlcNAc...) asparagine). A helical transmembrane segment spans residues 207-224; sequence SNHWIFWVGPFIGGALAV. Over 225-269 the chain is Cytoplasmic; sequence LIYDFILAPRSSDLTDRVKVWTSGQVEEYDLDADDINSRVEMKPK. Ser-247 is modified (phosphoserine). Phosphotyrosine is present on Tyr-253. Position 262 is a phosphoserine (Ser-262).

Belongs to the MIP/aquaporin (TC 1.A.8) family. In terms of assembly, homotetramer; each monomer provides an independent water pore. Component of the ankyrin-1 complex in the erythrocyte, composed of ANK1, RHCE, RHAG, SLC4A1, EPB42, GYPA, GYPB and AQP1. Interacts with EPHB2; involved in endolymph production in the inner ear. Identified in a complex with STOM. Interacts (via the N-terminal) with ANK1 (via ANK 1-5 repeats). Interacts (via the C-terminal) with EPB42. As to expression, detected in erythrocytes (at protein level). Expressed in a number of tissues including erythrocytes, renal tubules, retinal pigment epithelium, heart, lung, skeletal muscle, kidney and pancreas. Weakly expressed in brain, placenta and liver.

The protein localises to the cell membrane. It carries out the reaction H2O(in) = H2O(out). The enzyme catalyses nitric oxide(out) = nitric oxide(in). It catalyses the reaction CO2(out) = CO2(in). The catalysed reaction is glycerol(in) = glycerol(out). It carries out the reaction H2O2(out) = H2O2(in). The enzyme catalyses K(+)(in) = K(+)(out). It catalyses the reaction Na(+)(in) = Na(+)(out). The water channel activity is inhibited by P-choloromercuribenzene sulphonate and diethylpyrocarbonate(DPPC). The glycerol channel activity is inhibited by P-choloromercuribenzene sulphonate, diethylpyrocarbonate(DPPC), phloretin and Cu(2+). Inhibited by mercury. Its function is as follows. Forms a water channel that facilitates the transport of water across cell membranes, playing a crucial role in water homeostasis in various tissues. Could also be permeable to small solutes including hydrogen peroxide, glycerol and gases such as amonnia (NH3), nitric oxide (NO) and carbon dioxide (CO2). Recruited to the ankyrin-1 complex, a multiprotein complex of the erythrocyte membrane, it could be part of a CO2 metabolon, linking facilitated diffusion of CO2 across the membrane, anion exchange of Cl(-)/HCO3(-) and interconversion of dissolved CO2 and carbonic acid in the cytosol. In vitro, it shows non-selective gated cation channel activity and may be permeable to cations like K(+) and Na(+) in vivo. The chain is Aquaporin-1 from Homo sapiens (Human).